Consider the following 326-residue polypeptide: Transposase InsH for insertion sequence element IS5A (326 aa).

The protein belongs to the transposase 11 family.

Involved in the transposition of the insertion sequence IS5. The polypeptide is Transposase InsH for insertion sequence element IS5A (insH1) (Escherichia coli (strain K12)).